Reading from the N-terminus, the 536-residue chain is 2-isopropylmalate synthase (536 aa).

A Pyruvate carboxyltransferase domain is found at 8 to 273; it reads VLIFDTTLRD…FFGKDSESPT (266 aa). Mn(2+) contacts are provided by D17, H208, H210, and N244. The tract at residues 408–536 is regulatory domain; the sequence is KLHLVQVSCG…PQHDVVKANL (129 aa).

Belongs to the alpha-IPM synthase/homocitrate synthase family. LeuA type 1 subfamily. Homodimer. Mn(2+) serves as cofactor.

It localises to the cytoplasm. It catalyses the reaction 3-methyl-2-oxobutanoate + acetyl-CoA + H2O = (2S)-2-isopropylmalate + CoA + H(+). The protein operates within amino-acid biosynthesis; L-leucine biosynthesis; L-leucine from 3-methyl-2-oxobutanoate: step 1/4. Its function is as follows. Catalyzes the condensation of the acetyl group of acetyl-CoA with 3-methyl-2-oxobutanoate (2-ketoisovalerate) to form 3-carboxy-3-hydroxy-4-methylpentanoate (2-isopropylmalate). This chain is 2-isopropylmalate synthase, found in Prochlorococcus marinus (strain SARG / CCMP1375 / SS120).